Here is a 124-residue protein sequence, read N- to C-terminus: U12-barytoxin-Tl1a (124 aa).

Positions 1–20 (MKTMIAWLVLLTFAAALCFA) are cleaved as a signal peptide. The propeptide occupies 21-78 (DEGLKQEHMNERKKSRFREDIPDEISEDLLLQEMEAMEAELLEKEMRMEENRNSREKR). 3 disulfides stabilise this stretch: Cys79–Cys99, Cys86–Cys104, and Cys98–Cys118.

It belongs to the neurotoxin 14 (magi-1) family. 04 (ICK-6) subfamily. Expressed by the venom gland.

It is found in the secreted. Ion channel inhibitor. This chain is U12-barytoxin-Tl1a, found in Trittame loki (Brush-footed trapdoor spider).